A 774-amino-acid polypeptide reads, in one-letter code: Multiple C2 domain and transmembrane region protein 11 (774 aa).

Gly residues predominate over residues 1 to 12 (MAVNGTGNGTGD). The interval 1 to 30 (MAVNGTGNGTGDGDFSLKETSPNIGNGGVN) is disordered. 3 consecutive C2 domains span residues 9–145 (GTGD…PQWY), 184–307 (VTGE…SLWY), and 338–471 (LDES…THSY). Ca(2+)-binding residues include Asp-62, Asn-110, Asp-112, and Asp-118. Transmembrane regions (helical) follow at residues 608-628 (LFVV…CFVF) and 722-742 (FVSC…FLAF).

It belongs to the MCTP family. The cofactor is Ca(2+). As to expression, observed in flowers.

The protein resides in the endoplasmic reticulum membrane. Functionally, may function as a signaling molecule by regulating the trafficking of other regulators. In Arabidopsis thaliana (Mouse-ear cress), this protein is Multiple C2 domain and transmembrane region protein 11.